Reading from the N-terminus, the 375-residue chain is Anhydro-N-acetylmuramic acid kinase (375 aa).

14–21 (GTSMDGAD) contributes to the ATP binding site.

This sequence belongs to the anhydro-N-acetylmuramic acid kinase family.

The enzyme catalyses 1,6-anhydro-N-acetyl-beta-muramate + ATP + H2O = N-acetyl-D-muramate 6-phosphate + ADP + H(+). It functions in the pathway amino-sugar metabolism; 1,6-anhydro-N-acetylmuramate degradation. The protein operates within cell wall biogenesis; peptidoglycan recycling. Catalyzes the specific phosphorylation of 1,6-anhydro-N-acetylmuramic acid (anhMurNAc) with the simultaneous cleavage of the 1,6-anhydro ring, generating MurNAc-6-P. Is required for the utilization of anhMurNAc either imported from the medium or derived from its own cell wall murein, and thus plays a role in cell wall recycling. In Cupriavidus pinatubonensis (strain JMP 134 / LMG 1197) (Cupriavidus necator (strain JMP 134)), this protein is Anhydro-N-acetylmuramic acid kinase.